A 304-amino-acid polypeptide reads, in one-letter code: Putative S-adenosyl-L-methionine-dependent methyltransferase Mmcs_1043 (304 aa).

S-adenosyl-L-methionine is bound by residues Asp-130 and 159–160 (DL).

It belongs to the UPF0677 family.

Exhibits S-adenosyl-L-methionine-dependent methyltransferase activity. This is Putative S-adenosyl-L-methionine-dependent methyltransferase Mmcs_1043 from Mycobacterium sp. (strain MCS).